The primary structure comprises 202 residues: Pyrrolidone-carboxylate peptidase (202 aa).

Active-site residues include Glu-78, Cys-141, and His-165.

Belongs to the peptidase C15 family. As to quaternary structure, homotetramer.

Its subcellular location is the cytoplasm. It carries out the reaction Release of an N-terminal pyroglutamyl group from a polypeptide, the second amino acid generally not being Pro.. Removes 5-oxoproline from various penultimate amino acid residues except L-proline. The polypeptide is Pyrrolidone-carboxylate peptidase (Thermosipho melanesiensis (strain DSM 12029 / CIP 104789 / BI429)).